Reading from the N-terminus, the 4830-residue chain is Siderophore peptide synthetase fer3 (4830 aa).

The segment at L197–K623 is adenylation 1. One can recognise a Carrier 1 domain in the interval A751–T833. Residue S788 is modified to O-(pantetheine 4'-phosphoryl)serine. Residues Q879–T1317 are condensation 1. Residues F1358 to L1781 form an adenylation 2 region. The Carrier 2 domain maps to G1929–T2005. S1966 carries the O-(pantetheine 4'-phosphoryl)serine modification. Residues I2048–T2503 form a condensation 2 region. The interval A2573–I2977 is adenylation 3. A Carrier 3 domain is found at R3122–K3198. The residue at position 3159 (S3159) is an O-(pantetheine 4'-phosphoryl)serine. The segment at K3232–A3621 is condensation 3. The Carrier 4 domain occupies T3685–Q3760. Position 3720 is an O-(pantetheine 4'-phosphoryl)serine (S3720). The segment at R3779–D4199 is condensation 4. Residues S4264 to S4340 enclose the Carrier 5 domain. O-(pantetheine 4'-phosphoryl)serine is present on S4301. The tract at residues V4381–Q4708 is condensation 5.

This sequence belongs to the NRP synthetase family.

Its pathway is siderophore biosynthesis. Nonribosomal peptide synthetase; part of the gene cluster that mediates the biosynthesis of siderophore ferrichrome A which is contributing to organismal virulence. The first step of ferrichrome A biosynthesis is performed by the HMG-CoA synthase hcs1 which catalyzes the generation of HMG-CoA and CoA using acetoacetyl-CoA and acetyl-CoA as substrates. The enoyl-CoA isomerase/hydratase fer4 then catalyzes the conversion of hcs1-produced HMG-CoA to methylglutaconyl-CoA. The acyltransferase fer5 then fuses the fer4-generated methylglutaconyl-CoA with sid1-generated hydroxyornithine to yield methylglutaconyl hydroxyornithine. Methylglutaconyl hydroxyornithine is then available for use by the NRPS fer3 to generate ferrichrome A. The sequence is that of Siderophore peptide synthetase fer3 from Mycosarcoma maydis (Corn smut fungus).